A 339-amino-acid chain; its full sequence is Adenylosuccinate synthetase (339 aa).

Residues Gly-12–Ser-18 and Gly-42–Ser-44 contribute to the GTP site. The active-site Proton acceptor is Asp-13. 2 residues coordinate Mg(2+): Asp-13 and Gly-42. Residues Asp-13–Lys-16, Asn-40–His-43, Thr-127, Arg-141, Gln-179, Thr-194, and Arg-256 contribute to the IMP site. The active-site Proton donor is the His-43. A substrate-binding site is contributed by Thr-252–Arg-258. Residues Arg-258, Met-284–Asp-286, and Lys-324–Gly-326 each bind GTP.

It belongs to the adenylosuccinate synthetase family. Homodimer. The cofactor is Mg(2+).

The protein resides in the cytoplasm. It carries out the reaction IMP + L-aspartate + GTP = N(6)-(1,2-dicarboxyethyl)-AMP + GDP + phosphate + 2 H(+). The protein operates within purine metabolism; AMP biosynthesis via de novo pathway; AMP from IMP: step 1/2. In terms of biological role, plays an important role in the de novo pathway of purine nucleotide biosynthesis. Catalyzes the first committed step in the biosynthesis of AMP from IMP. This Pyrococcus horikoshii (strain ATCC 700860 / DSM 12428 / JCM 9974 / NBRC 100139 / OT-3) protein is Adenylosuccinate synthetase.